Reading from the N-terminus, the 208-residue chain is Neuroendocrine protein 7B2 (208 aa).

An N-terminal signal peptide occupies residues 1–26 (MGMYSAIPLALPMVLLMVYGLTPSLG). The cysteines at positions 120 and 129 are disulfide-linked. A Phosphoserine modification is found at Ser204.

The protein belongs to the 7B2 family. In terms of assembly, interacts with pcsk2 early in the secretory pathway. Dissociation occurs at later stages. In terms of processing, proteolytically cleaved in the Golgi by a furin-like convertase to generate bioactive peptides. Post-translationally, sulfated on tyrosine residues.

The protein localises to the secreted. Functionally, acts as a molecular chaperone for pcsk2, preventing its premature activation in the regulated secretory pathway. Binds to inactive pcsk2 in the endoplasmic reticulum and facilitates its transport from there to later compartments of the secretory pathway where it is proteolytically matured and activated. Also required for cleavage of pcsk2 but does not appear to be involved in its folding. The protein is Neuroendocrine protein 7B2 (scg5.L) of Xenopus laevis (African clawed frog).